Reading from the N-terminus, the 137-residue chain is Small ribosomal subunit protein uS12 (137 aa).

Asp-89 is subject to 3-methylthioaspartic acid. Positions 105–137 are disordered; that stretch reads AGVAGRTQRRSKYGAKRPKAGQAAAPAKGKGKK. Over residues 111-123 the composition is skewed to basic residues; that stretch reads TQRRSKYGAKRPK. Residues 124-137 show a composition bias toward low complexity; sequence AGQAAAPAKGKGKK.

Belongs to the universal ribosomal protein uS12 family. As to quaternary structure, part of the 30S ribosomal subunit. Contacts proteins S8 and S17. May interact with IF1 in the 30S initiation complex.

With S4 and S5 plays an important role in translational accuracy. Its function is as follows. Interacts with and stabilizes bases of the 16S rRNA that are involved in tRNA selection in the A site and with the mRNA backbone. Located at the interface of the 30S and 50S subunits, it traverses the body of the 30S subunit contacting proteins on the other side and probably holding the rRNA structure together. The combined cluster of proteins S8, S12 and S17 appears to hold together the shoulder and platform of the 30S subunit. The sequence is that of Small ribosomal subunit protein uS12 from Phocaeicola vulgatus (strain ATCC 8482 / DSM 1447 / JCM 5826 / CCUG 4940 / NBRC 14291 / NCTC 11154) (Bacteroides vulgatus).